Here is a 530-residue protein sequence, read N- to C-terminus: uncharacterized protein (530 aa).

This is an uncharacterized protein from Acanthamoeba polyphaga (Amoeba).